Consider the following 717-residue polypeptide: Radial spoke head protein 6 homolog A (717 aa).

Disordered stretches follow at residues 1 to 65 (MGDL…SLSQ), 503 to 523 (SEEE…YEEN), 563 to 588 (TEEE…QEVG), and 672 to 717 (GPEI…ETDD). 3 stretches are compositionally biased toward acidic residues: residues 503 to 513 (SEEEGDEEEEG), 564 to 585 (EEEE…EVEQ), and 700 to 717 (TEEE…ETDD).

Belongs to the flagellar radial spoke RSP4/6 family. As to quaternary structure, component of the axonemal radial spoke 1 (RS1) and 2 (RS2) complexes, at least composed of spoke head proteins RSPH1, RSPH3, RSPH9 and the cilia-specific component RSPH4A or sperm-specific component RSPH6A, spoke stalk proteins RSPH14, DNAJB13, DYDC1, ROPN1L and NME5, and the RS1 complex-specific anchor protein IQUB. Interacts with RSPH1. Interacts with RSPH3B. Interacts with RSPH4A. Interacts with RSPH9. Interacts with RSPH10B. Phosphorylated by PKA. Phosphorylation increases in capacitated sperm.

The protein localises to the cytoplasm. Its subcellular location is the cytoskeleton. The protein resides in the flagellum axoneme. Functions as part of radial spoke complexes in the axoneme of sperm flagella that play an important part in motility. The triple radial spokes (RS1, RS2 and RS3) are required to modulate beating of the sperm flagellum. This is Radial spoke head protein 6 homolog A from Homo sapiens (Human).